The chain runs to 359 residues: Cyclic AMP response element-binding protein B (359 aa).

Disordered stretches follow at residues 1-73 (MDNS…AQGG) and 185-238 (VRNK…FTEI). The segment covering 9-32 (NGNSSAASGSNDVVDVVAQQAAAA) has biased composition (low complexity). The segment covering 33-47 (VGGGGGGGGGGGGGN) has biased composition (gly residues). Residues 48-70 (PQQQQQNPQSTTAGGPTGATNNA) show a composition bias toward low complexity. Residues 198–257 (KPEPNTQHPEDSDESLSDDDSQHHRSELTRRPSYNKIFTEISGPDMSGASLPMSDGVLNS) form the KID domain. Ser209, Ser212, and Ser214 each carry phosphoserine. A compositionally biased stretch (basic and acidic residues) spans 217–227 (DSQHHRSELTR). Residues 300–359 (TRKREIRLQKNREAARECRRKKKEYIKCLENRVAVLENQNKALIEELKSLKELYCQTKND) enclose the bZIP domain. The interval 301 to 326 (RKREIRLQKNREAARECRRKKKEYIK) is basic motif. Positions 328-349 (LENRVAVLENQNKALIEELKSL) are leucine-zipper.

It belongs to the bZIP family. ATF subfamily. Homodimer. As to expression, most cells of the adult brain; cell bodies, but not neuropil.

The protein resides in the nucleus. In terms of biological role, isoform E is a PKA-dependent transcriptional activator. Isoform J is a direct antagonist of activation by isoform E in cell culture. Binds the cAMP response element (CRE) (consensus: 5'-GTGACGT[AC][AG]-3'), a sequence present in many viral and cellular promoters. Has a role in long-term memory. This chain is Cyclic AMP response element-binding protein B, found in Drosophila melanogaster (Fruit fly).